A 91-amino-acid polypeptide reads, in one-letter code: Dynein 8 kDa light chain, flagellar outer arm (91 aa).

Belongs to the dynein light chain family. As to quaternary structure, consists of at least 3 heavy chains (alpha, beta and gamma), 2 intermediate chains and 8 light chains.

The protein localises to the cytoplasm. It localises to the cytoskeleton. Its subcellular location is the flagellum axoneme. The polypeptide is Dynein 8 kDa light chain, flagellar outer arm (Chlamydomonas reinhardtii (Chlamydomonas smithii)).